A 359-amino-acid chain; its full sequence is Protein Wnt-5b (359 aa).

A signal peptide spans 1–17 (MPSLLLVVVAALLSSWA). Cys83 and Cys94 are oxidised to a cystine. Asn93 and Asn99 each carry an N-linked (GlcNAc...) asparagine glycan. Intrachain disulfides connect Cys133–Cys141, Cys143–Cys161, Cys217–Cys231, Cys219–Cys226, Cys288–Cys319, Cys304–Cys314, Cys318–Cys358, Cys334–Cys349, Cys336–Cys346, and Cys341–Cys342. Residue Ser223 is the site of O-palmitoleoyl serine; by PORCN attachment. Asn291 and Asn305 each carry an N-linked (GlcNAc...) asparagine glycan.

The protein belongs to the Wnt family. In terms of assembly, interacts with PORCN. Post-translationally, palmitoleoylation is required for efficient binding to frizzled receptors. Depalmitoleoylation leads to Wnt signaling pathway inhibition.

It is found in the secreted. The protein localises to the extracellular space. It localises to the extracellular matrix. Its function is as follows. Ligand for members of the frizzled family of seven transmembrane receptors. Probable developmental protein. May be a signaling molecule which affects the development of discrete regions of tissues. Is likely to signal over only few cell diameters. The protein is Protein Wnt-5b (Wnt5b) of Mus musculus (Mouse).